The sequence spans 122 residues: Large ribosomal subunit protein uL14 (122 aa).

The protein belongs to the universal ribosomal protein uL14 family. As to quaternary structure, part of the 50S ribosomal subunit. Forms a cluster with proteins L3 and L19. In the 70S ribosome, L14 and L19 interact and together make contacts with the 16S rRNA in bridges B5 and B8.

Binds to 23S rRNA. Forms part of two intersubunit bridges in the 70S ribosome. This is Large ribosomal subunit protein uL14 from Colwellia psychrerythraea (strain 34H / ATCC BAA-681) (Vibrio psychroerythus).